A 973-amino-acid chain; its full sequence is ATP-dependent DNA helicase Q5 (973 aa).

Residues 39–213 form the Helicase ATP-binding domain; sequence MAVVKGDKDV…FAALHLKQPV (175 aa). Residue 52 to 59 coordinates ATP; sequence MPTGAGKS. Residues 157 to 160 carry the DEAH box motif; the sequence is DEAH. Positions 241–398 constitute a Helicase C-terminal domain; the sequence is NLRDFCLKAL…NKPSDKATLL (158 aa). Zn(2+) is bound by residues C412, C428, C432, and C435. Phosphoserine is present on residues S489 and S492. Residues 491–621 are interaction with POLR2A; that stretch reads GSGDEGRDEA…ASKDGQLYDM (131 aa). 3 disordered regions span residues 518–538, 679–795, and 822–884; these read GKEA…LRDA, TEKL…VPGK, and CSLE…AREP. T527 carries the post-translational modification Phosphothreonine. An interaction with RAD51 region spans residues 653–726; that stretch reads PKRVGAGFSK…APGSRTNCGD (74 aa). At S728 the chain carries Phosphoserine; by CDK1. A compositionally biased stretch (basic and acidic residues) spans 840-856; sequence TQAEKRPRPQQESQEKR. Residues 863–878 are compositionally biased toward polar residues; it reads PSTNSSALASDPSTEN.

This sequence belongs to the helicase family. RecQ subfamily. In terms of assembly, monomer. Interacts with TOP2A, TOP3A and TOP3B. Interacts with RNA polymerase II subunit POLR2A. Identified in a complex with the RNA polymerase II core bound to DNA. Interacts with RAD51. Interacts with WRN; this interaction stimulates WRN helicase activity on DNA fork duplexes. Interacts with MUS1; this interaction promotes MUS81-dependent mitotic DNA synthesis. The cofactor is Zn(2+). Post-translationally, phosphorylated by CDK1 at Ser-728; this phosphorylation is required for RECQL5-mediated disruption of RAD51 filaments on stalled replication forks.

It is found in the nucleus. The protein localises to the nucleoplasm. The catalysed reaction is Couples ATP hydrolysis with the unwinding of duplex DNA by translocating in the 3'-5' direction.. It catalyses the reaction ATP + H2O = ADP + phosphate + H(+). DNA helicase that plays an important role in DNA replication, transcription and repair. Binds to the RNA polymerase II subunit POLR2A during transcription elongation and suppresses transcription-associated genomic instability. Also associates with POLR1A and enforces the stability of ribosomal DNA arrays. Plays an important role in mitotic chromosome separation after cross-over events and cell cycle progress. Mechanistically, removes RAD51 filaments protecting stalled replication forks at common fragile sites and stimulates MUS81-EME1 endonuclease leading to mitotic DNA synthesis. Required for efficient DNA repair, including repair of inter-strand cross-links. Stimulates DNA decatenation mediated by TOP2A. Prevents sister chromatid exchange and homologous recombination. The chain is ATP-dependent DNA helicase Q5 (Recql5) from Rattus norvegicus (Rat).